Here is a 239-residue protein sequence, read N- to C-terminus: Bradykinin-potentiating and C-type natriuretic peptides (239 aa).

A signal peptide spans 1–23; it reads MFVSRLAASGLLLLALLAVSLDG. 2 consecutive propeptides follow at residues 24–33 and 43–49; these read KPVQQWSHKG and LVVQQWS. Position 50 is a pyrrolidone carboxylic acid (glutamine 50). Residues 62–64 constitute a propeptide that is removed on maturation; sequence VVV. Position 65 is a pyrrolidone carboxylic acid (glutamine 65). Positions 76–82 are excised as a propeptide; the sequence is LVVQQWS. Glutamine 83 carries the post-translational modification Pyrrolidone carboxylic acid. Residues 95-97 constitute a propeptide that is removed on maturation; sequence LVV. Glutamine 98 is modified (pyrrolidone carboxylic acid). 2 propeptides span residues 109–136 and 148–217; these read LLKP…AALD and GSKA…LAKK. Residues 132-205 are disordered; sequence EAALDTPPAG…HHAVGGGGGG (74 aa). A compositionally biased stretch (low complexity) spans 161 to 171; sequence SKGASATSAAS. A compositionally biased stretch (basic and acidic residues) spans 173-183; that stretch reads PMRDLRTDGKQ. Cysteine 223 and cysteine 239 are joined by a disulfide.

It in the N-terminal section; belongs to the bradykinin-potentiating peptide family. In the central section; belongs to the bradykinin inhibitor peptide family. This sequence in the C-terminal section; belongs to the natriuretic peptide family. As to expression, expressed by the venom gland.

It is found in the secreted. Functionally, bradykinin-potentiating peptides both inhibit the activity of the angiotensin-converting enzyme (ACE) and enhances the action of bradykinin by inhibiting the peptidases that inactivate it. They act as indirect hypotensive agent. In terms of biological role, inhibits angiotensin-converting enzyme (ACE) activity (IC(50)=4.25 uM), preventing the release of angiotensin and thus indirectly contributing to hypotension. In vivo, induce hypotensive response in both normotensive and hypertensive rats. Its function is as follows. antagonizes the vasodilatory actions of bradykinin at the B2 bradykinin receptor (BDKRB2). Has a vasorelaxant activity in rat aortic strips and a diuretic potency in anesthetized rats. May act by activating natriuretic receptors (NPR1 and/or NPR2). The chain is Bradykinin-potentiating and C-type natriuretic peptides from Lachesis muta muta (Bushmaster).